Here is a 278-residue protein sequence, read N- to C-terminus: UPF0276 protein Ssed_2857 (278 aa).

This sequence belongs to the UPF0276 family.

In Shewanella sediminis (strain HAW-EB3), this protein is UPF0276 protein Ssed_2857.